Consider the following 128-residue polypeptide: Glycine cleavage system H protein (128 aa).

Positions Val23–Gln105 constitute a Lipoyl-binding domain. Lys64 is modified (N6-lipoyllysine).

The protein belongs to the GcvH family. The glycine cleavage system is composed of four proteins: P, T, L and H. (R)-lipoate serves as cofactor.

In terms of biological role, the glycine cleavage system catalyzes the degradation of glycine. The H protein shuttles the methylamine group of glycine from the P protein to the T protein. The chain is Glycine cleavage system H protein from Alcanivorax borkumensis (strain ATCC 700651 / DSM 11573 / NCIMB 13689 / SK2).